The sequence spans 942 residues: Lambda-carrageenase (942 aa).

Positions Met-1–Ala-25 are cleaved as a signal peptide.

Monomer.

Its subcellular location is the secreted. The catalysed reaction is Endohydrolysis of (1-&gt;4)-beta-linkages in the backbone of lambda-carrageenan, resulting in the tetrasaccharide alpha-D-Galp2,6S2-(1-&gt;3)-beta-D-Galp2S-(1-&gt;4)-alpha-D-Galp2,6S2-(1-&gt;3)-D-Galp2S.. Hydrolyzes lambda-carrageenan with inversion of anomeric configuration. Does not hydrolyze iota- and kappa-carrageenans, agarose or porphyran. This is Lambda-carrageenase from Pseudoalteromonas carrageenovora (Alteromonas carrageenovora).